The chain runs to 510 residues: Zinc metalloproteinase (510 aa).

Residues 1–24 (MKSKLICIIMVIAFQAHFTMTVKA) form the signal peptide. The propeptide occupies 25–200 (DSVGEEKLQN…ILKKQNMLSE (176 aa)). Zn(2+) is bound at residue His-349. Residue Glu-350 is part of the active site. Zn(2+) is bound by residues His-353 and Glu-373. His-437 functions as the Proton donor in the catalytic mechanism.

The protein belongs to the peptidase M4 family. Requires Zn(2+) as cofactor.

The protein resides in the secreted. Functionally, probably linked to the pathogenesis of listerial infection. In Listeria monocytogenes serovar 1/2a (strain ATCC BAA-679 / EGD-e), this protein is Zinc metalloproteinase (mpl).